The sequence spans 926 residues: MAFLIILITCFVIILATSQPCQTPDDFVAATSPGHIIIGGLFAIHEKMLSSEDSPRRPQIQECVGFEISVFLQTLAMIHSIEMINNSTLLPGVKLGYEIYDTCTEVTVAMAATLRFLSKFNCSRETVEFKCDYSSYMPRVKAVIGSGYSEITMAVSRMLNLQLMPQVGYESTAEILSDKIRFPSFLRTVPSDFHQIKAMAHLIQKSGWNWIGIITTDDDYGRLALNTFIIQAEANNVCIAFKEVLPAFLSDNTIEVRINRTLKKIILEAQVNVIVVFLRQFHVFDLFNKAIEMNINKMWIASDNWSTATKITTIPNVKKIGKVVGFAFRRGNISSFHSFLQNLHLLPSDSHKLLHEYAMHLSACAYVKDTDLSQCIFNHSQRTLAYKANKAIERNFVMRNDFLWDYAEPGLIHSIQLAVFALGYAIRDLCQARDCQNPNAFQPWELLGVLKNVTFTDGWNSFHFDAHGDLNTGYDVVLWKEINGHMTVTKMAEYDLQNDVFIIPDQETKNEFRNLKQIQSKCSKECSPGQMKKTTRSQHICCYECQNCPENHYTNQTDMPHCLLCNNKTHWAPVRSTMCFEKEVEYLNWNDSLAILLLILSLLGIIFVLVVGIIFTRNLNTPVVKSSGGLRVCYVILLCHFLNFASTSFFIGEPQDFTCKTRQTMFGVSFTLCISCILTKSLKILLAFSFDPKLQKFLKCLYRPILIIFTCTGIQVVICTLWLIFAAPTVEVNVSLPRVIILECEEGSILAFGTMLGYIAILAFICFIFAFKGKYENYNEAKFITFGMLIYFIAWITFIPIYATTFGKYVPAVEIIVILISNYGILYCTFIPKCYVIICKQEINTKSAFLKMIYSYSSHSVSSIALSPASLDSMSGNVTMTNPSSSGKSATWQKSKDLQAQAFAHICRENATSVSKTLPRKRMSSI.

Positions 1-18 (MAFLIILITCFVIILATS) are cleaved as a signal peptide. The Extracellular segment spans residues 19–594 (QPCQTPDDFV…EYLNWNDSLA (576 aa)). N-linked (GlcNAc...) asparagine glycans are attached at residues asparagine 121, asparagine 259, asparagine 332, asparagine 378, asparagine 452, asparagine 555, asparagine 567, and asparagine 590. The helical transmembrane segment at 595–615 (ILLLILSLLGIIFVLVVGIIF) threads the bilayer. Topologically, residues 616-631 (TRNLNTPVVKSSGGLR) are cytoplasmic. Residues 632–652 (VCYVILLCHFLNFASTSFFIG) traverse the membrane as a helical segment. Topologically, residues 653–669 (EPQDFTCKTRQTMFGVS) are extracellular. Residues 670 to 690 (FTLCISCILTKSLKILLAFSF) form a helical membrane-spanning segment. The Cytoplasmic segment spans residues 691–704 (DPKLQKFLKCLYRP). The helical transmembrane segment at 705-725 (ILIIFTCTGIQVVICTLWLIF) threads the bilayer. At 726–748 (AAPTVEVNVSLPRVIILECEEGS) the chain is on the extracellular side. A glycan (N-linked (GlcNAc...) asparagine) is linked at asparagine 733. Residues 749-769 (ILAFGTMLGYIAILAFICFIF) form a helical membrane-spanning segment. At 770 to 782 (AFKGKYENYNEAK) the chain is on the cytoplasmic side. A helical transmembrane segment spans residues 783-803 (FITFGMLIYFIAWITFIPIYA). Topologically, residues 804 to 810 (TTFGKYV) are extracellular. A helical transmembrane segment spans residues 811 to 831 (PAVEIIVILISNYGILYCTFI). At 832-926 (PKCYVIICKQ…TLPRKRMSSI (95 aa)) the chain is on the cytoplasmic side.

This sequence belongs to the G-protein coupled receptor 3 family. In terms of assembly, homodimer; disulfide-linked. Isoform 1 is expressed at high level in brain, skeletal muscle, testis, bone, calvaria, osteoblasts and leukocytes. Expressed at intermediate level in liver, heart, kidney and spleen. Expressed at low level in lung, pancreas, placenta and ovary. Not detected in thymus, prostate, small intestine, tongue and colon. Isoform 1 and isoform 2 are expressed in kidney at the same level. Isoform 2 is expressed at lower level than isoform 1 in the other tissues.

Its subcellular location is the cell membrane. Functionally, receptor activated by multiple ligands, including osteocalcin (BGLAP), basic amino acids, and various cations. Activated by amino acids with a preference for basic amino acids such as L-Lys, L-Arg and L-ornithine but also by small and polar amino acids. The L-alpha amino acids respond is augmented by divalent cations Ca(2+) and Mg(2+). Seems to act through a G(q)/G(11) and G(i)-coupled pathway. Regulates testosterone production by acting as a ligand for uncarboxylated osteocalcin hormone: osteocalcin-binding at the surface of Leydig cells initiates a signaling response that promotes the expression of enzymes required for testosterone synthesis in a CREB-dependent manner. Mediates the non-genomic effects of androgens in multiple tissue. May coordinate nutritional and hormonal anabolic signals through the sensing of extracellular amino acids, osteocalcin, divalent ions and its responsiveness to anabolic steroids. This Homo sapiens (Human) protein is G-protein coupled receptor family C group 6 member A (GPRC6A).